The following is a 216-amino-acid chain: Urease accessory protein UreG (216 aa).

25-32 (GPVGSGKT) is a binding site for GTP.

It belongs to the SIMIBI class G3E GTPase family. UreG subfamily. As to quaternary structure, homodimer. UreD, UreF and UreG form a complex that acts as a GTP-hydrolysis-dependent molecular chaperone, activating the urease apoprotein by helping to assemble the nickel containing metallocenter of UreC. The UreE protein probably delivers the nickel.

The protein localises to the cytoplasm. Functionally, facilitates the functional incorporation of the urease nickel metallocenter. This process requires GTP hydrolysis, probably effectuated by UreG. The sequence is that of Urease accessory protein UreG from Burkholderia mallei (strain NCTC 10247).